The sequence spans 198 residues: Beta-crystallin A1-1 (198 aa).

An N-terminal arm region spans residues 1–13 (MAQINPLPVPLGP). Beta/gamma crystallin 'Greek key' domains lie at 14-53 (WKIT…KVEC) and 54-100 (GAWI…RPIC). Residues 101 to 106 (SANHKE) form a connecting peptide region. 2 consecutive Beta/gamma crystallin 'Greek key' domains span residues 107-148 (SKLV…KVQC) and 149-197 (GAWV…RRIQ).

This sequence belongs to the beta/gamma-crystallin family. In terms of assembly, homo/heterodimer, or complexes of higher-order. The structure of beta-crystallin oligomers seems to be stabilized through interactions between the N-terminal arms. Post-translationally, the N-terminus is blocked.

In terms of biological role, crystallins are the dominant structural components of the vertebrate eye lens. This Aquarana catesbeiana (American bullfrog) protein is Beta-crystallin A1-1.